The following is a 148-amino-acid chain: Transcriptional regulator MraZ (148 aa).

SpoVT-AbrB domains lie at 7–56 and 85–128; these read KERH…EPDI and LDVV…APER.

The protein belongs to the MraZ family. As to quaternary structure, forms oligomers.

The protein localises to the cytoplasm. Its subcellular location is the nucleoid. The sequence is that of Transcriptional regulator MraZ from Chlorobium phaeobacteroides (strain DSM 266 / SMG 266 / 2430).